Consider the following 396-residue polypeptide: Elongation factor Tu (396 aa).

Positions 10–206 (KPHVNVGTIG…ALDSYIPTPE (197 aa)) constitute a tr-type G domain. Positions 19-26 (GHVDHGKT) are G1. 19–26 (GHVDHGKT) provides a ligand contact to GTP. Threonine 26 contributes to the Mg(2+) binding site. Residues 60–64 (GITIN) form a G2 region. The segment at 81–84 (DCPG) is G3. GTP contacts are provided by residues 81 to 85 (DCPGH) and 136 to 139 (NKCD). The segment at 136-139 (NKCD) is G4. A G5 region spans residues 174-176 (SAL).

It belongs to the TRAFAC class translation factor GTPase superfamily. Classic translation factor GTPase family. EF-Tu/EF-1A subfamily. In terms of assembly, monomer.

It is found in the cytoplasm. The catalysed reaction is GTP + H2O = GDP + phosphate + H(+). Its function is as follows. GTP hydrolase that promotes the GTP-dependent binding of aminoacyl-tRNA to the A-site of ribosomes during protein biosynthesis. In Aromatoleum aromaticum (strain DSM 19018 / LMG 30748 / EbN1) (Azoarcus sp. (strain EbN1)), this protein is Elongation factor Tu.